A 340-amino-acid chain; its full sequence is Chitinase 2 (340 aa).

The first 32 residues, 1 to 32 (MSTPRAAASLAKKAALVALAVLAAALATAARA), serve as a signal peptide directing secretion. One can recognise a Chitin-binding type-1 domain in the interval 33 to 73 (EQCGAQAGGARCPNCLCCSRWGWCGTTSDFCGDGCQSQCSG). Intrachain disulfides connect Cys-35–Cys-50, Cys-44–Cys-56, Cys-47–Cys-74, Cys-49–Cys-63, Cys-67–Cys-71, Cys-110–Cys-172, Cys-184–Cys-192, and Cys-291–Cys-323. Glu-154 (proton donor) is an active-site residue.

This sequence belongs to the glycosyl hydrolase 19 family. Chitinase class I subfamily. Expressed in roots, sheaths and meristems.

The enzyme catalyses Random endo-hydrolysis of N-acetyl-beta-D-glucosaminide (1-&gt;4)-beta-linkages in chitin and chitodextrins.. Hydrolyzes chitin and plays a role in defense against fungal pathogens containing chitin. Its overexpression confers enhanced resistance to sheath blight pathogen (R.solani). This chain is Chitinase 2 (Cht2), found in Oryza sativa subsp. japonica (Rice).